The following is a 376-amino-acid chain: Arginine/serine-rich coiled-coil protein 2 (376 aa).

The interval 1–171 (MIRTNFLLKQ…PSPPPFRGRN (171 aa)) is disordered. Over residues 13–52 (RHESKDKSSKRHKSEEHNDKEHSSDKGRERLNSSENGEDR) the composition is skewed to basic and acidic residues. Phosphoserine is present on Ser-45. Residues 53-155 (HKRKERKSSR…KRIEKPRRFS (103 aa)) are compositionally biased toward basic residues. Residues 171–214 (NTAMDAQEALARRLERAKKLQEQREKEMVEKQKQQEMAAAAAAT) are a coiled coil. Residue Lys-317 forms a Glycyl lysine isopeptide (Lys-Gly) (interchain with G-Cter in SUMO1); alternate linkage. A Glycyl lysine isopeptide (Lys-Gly) (interchain with G-Cter in SUMO2); alternate cross-link involves residue Lys-317. Position 318 is a phosphoserine (Ser-318).

Belongs to the RSRC2 family.

The chain is Arginine/serine-rich coiled-coil protein 2 (Rsrc2) from Mus musculus (Mouse).